Here is a 102-residue protein sequence, read N- to C-terminus: UPF0328 protein ECU10_1820 (102 aa).

The protein belongs to the UPF0328 family.

The protein is UPF0328 protein ECU10_1820 of Encephalitozoon cuniculi (strain GB-M1) (Microsporidian parasite).